The following is a 469-amino-acid chain: uncharacterized protein (469 aa).

Disordered regions lie at residues 248–314 and 327–418; these read RDDN…EPES and QMDQ…PRPT. Polar residues-rich tracts occupy residues 292-305 and 350-365; these read ESSNTRDQQTNAAS and TARQPQVTPTRVPNTV. Positions 366 to 377 are enriched in low complexity; that stretch reads TATSASTPASTS.

This is an uncharacterized protein from Cryphonectria parasitica (Chestnut blight fungus).